Reading from the N-terminus, the 375-residue chain is Protein DEK (375 aa).

The segment at 1 to 61 is disordered; it reads MSASAPAAEG…LIVEGKREKK (61 aa). S2 is subject to N-acetylserine. Residues T13 and T15 each carry the phosphothreonine modification. Position 19 is a phosphoserine (S19). Positions 19–30 are enriched in basic and acidic residues; the sequence is SEKEPEMPGPRE. Acidic residues predominate over residues 31–47; the sequence is ESEEEEDEDDEEEEEEE. S32 is modified (phosphoserine; by CK2). A compositionally biased stretch (basic and acidic residues) spans 48 to 61; the sequence is KEKSLIVEGKREKK. S51, S72, S121, and S122 each carry phosphoserine. The region spanning 149-183 is the SAP domain; sequence LKKFRNAMLKSICEVLDLERSGVNSELVKRILNFL. S159 is modified (phosphoserine; by CK2). A disordered region spans residues 184–325; it reads MHPKPSGKPL…LKKPPTDEEL (142 aa). Positions 194–203 are enriched in basic residues; sequence PKSKKTCSKG. Phosphothreonine; by CK2 is present on T199. Phosphoserine; by CK2 occurs at positions 201 and 204. Positions 205 to 221 match the Nuclear localization signal motif; it reads KKERNSSGMARKAKRTK. 5 positions are modified to phosphoserine: S210, S227, S230, S231, and S232. 3 positions are modified to phosphoserine; by CK2: S243, S244, and S251. Residues 243-253 show a composition bias toward acidic residues; the sequence is SSDDEDKESEE. Residues 258 to 277 are compositionally biased toward basic residues; the sequence is KTAKREKPKQKATSKSKKSV. Low complexity predominate over residues 278 to 296; it reads KSANVKKADSSTTKKNQNS. S279 carries the post-translational modification ADP-ribosylserine. A phosphoserine; by CK2 mark is found at S287 and S288. T289 and T290 each carry phosphothreonine; by CK2. Residues S296, S301, S303, S306, and S307 each carry the phosphoserine; by CK2 modification. Residues 319–375 enclose the DEK-C domain; it reads PPTDEELKETIKKLLASANLEEVTMKQICKKVYENYPTYDLTERKDFIKTTVKELIS. DNA-binding regions lie at residues 337–351 and 367–371; these read NLEE…KKVY and KTTVK.

Found in a mRNA splicing-dependent exon junction complex (EJC) with DEK, RBM8A, RNPS1, SRRM1 and ALYREF/THOC4. Interacts with histones H2A, H2B, H3, H4, acetylated histone H4, non-phosphorylated DAXX and HDAC2. Component of the B-WICH complex, at least composed of SMARCA5/SNF2H, BAZ1B/WSTF, SF3B1, DEK, MYO1C, ERCC6, MYBBP1A and DDX21. Binds DNA. Post-translationally, phosphorylated by CK2. Phosphorylation fluctuates during the cell cycle with a moderate peak during G(1) phase, and weakens the binding of DEK to DNA. Ubiquitous. Expressed at relatively high levels.

The protein localises to the nucleus. Its function is as follows. Involved in chromatin organization. In Homo sapiens (Human), this protein is Protein DEK (DEK).